We begin with the raw amino-acid sequence, 157 residues long: NADPH-dependent 7-cyano-7-deazaguanine reductase (157 aa).

The Thioimide intermediate role is filled by cysteine 55. The active-site Proton donor is the aspartate 62. Substrate is bound by residues 77–79 and 96–97; these read VES and HE.

The protein belongs to the GTP cyclohydrolase I family. QueF type 1 subfamily.

Its subcellular location is the cytoplasm. It catalyses the reaction 7-aminomethyl-7-carbaguanine + 2 NADP(+) = 7-cyano-7-deazaguanine + 2 NADPH + 3 H(+). The protein operates within tRNA modification; tRNA-queuosine biosynthesis. Functionally, catalyzes the NADPH-dependent reduction of 7-cyano-7-deazaguanine (preQ0) to 7-aminomethyl-7-deazaguanine (preQ1). This is NADPH-dependent 7-cyano-7-deazaguanine reductase from Neisseria meningitidis serogroup A / serotype 4A (strain DSM 15465 / Z2491).